The sequence spans 187 residues: UPF0302 protein SERP1032 (187 aa).

This sequence belongs to the UPF0302 family.

The polypeptide is UPF0302 protein SERP1032 (Staphylococcus epidermidis (strain ATCC 35984 / DSM 28319 / BCRC 17069 / CCUG 31568 / BM 3577 / RP62A)).